The following is a 287-amino-acid chain: Protease HtpX (287 aa).

The next 2 helical transmembrane spans lie at 4–24 and 33–53; these read IFLLIATNLAVLLVASIVMSI and GGLLVFAAIFGFGGAFISLAI. His139 contributes to the Zn(2+) binding site. Residue Glu140 is part of the active site. His143 serves as a coordination point for Zn(2+). 2 helical membrane-spanning segments follow: residues 154–174 and 195–215; these read LIQGVVNTFVIFAARVVAGII and AVVFVLDMLFGILASIIVAYF. Glu220 contacts Zn(2+).

Belongs to the peptidase M48B family. Zn(2+) is required as a cofactor.

It is found in the cell inner membrane. The polypeptide is Protease HtpX (Shewanella sp. (strain MR-4)).